Reading from the N-terminus, the 198-residue chain is Nucleoid occlusion factor SlmA (198 aa).

Residues 10–70 (NRREEILQSL…SLIEFIEDSL (61 aa)) enclose the HTH tetR-type domain. The H-T-H motif DNA-binding region spans 33–52 (TTAKLAASVGVSEAALYRHF). Residues 117–144 (EQDRLQGRINQLFERIEAQLRQVLREKR) are a coiled coil.

Belongs to the nucleoid occlusion factor SlmA family. As to quaternary structure, homodimer. Interacts with FtsZ.

The protein resides in the cytoplasm. Its subcellular location is the nucleoid. Required for nucleoid occlusion (NO) phenomenon, which prevents Z-ring formation and cell division over the nucleoid. Acts as a DNA-associated cell division inhibitor that binds simultaneously chromosomal DNA and FtsZ, and disrupts the assembly of FtsZ polymers. SlmA-DNA-binding sequences (SBS) are dispersed on non-Ter regions of the chromosome, preventing FtsZ polymerization at these regions. This is Nucleoid occlusion factor SlmA from Escherichia coli (strain 55989 / EAEC).